The primary structure comprises 351 residues: ABC transporter nucleoside-binding protein BmpA (351 aa).

The N-terminal stretch at 1 to 21 (MKKRVIAVSAIALASVAVLAG) is a signal peptide. Cys22 carries N-palmitoyl cysteine lipidation. Cys22 carries S-diacylglycerol cysteine lipidation.

This sequence belongs to the BMP lipoprotein family. The complex is composed of two ATP-binding proteins (NupA), two transmembrane proteins (NupB and NupC) and a solute-binding protein (BmpA).

It localises to the cell membrane. Functionally, part of an ABC transporter complex involved in the uptake of all common nucleosides. The protein is ABC transporter nucleoside-binding protein BmpA of Lactococcus lactis subsp. cremoris (strain MG1363).